A 520-amino-acid chain; its full sequence is Nucleolar protein 12 (520 aa).

Disordered stretches follow at residues 1–29 (MGKK…NVSV) and 41–185 (AGPV…DDDE). Residues 78–95 (ASEDQFMEDAPESPDAAE) are compositionally biased toward acidic residues. Positions 120-132 (SYMRRLAKEEQKE) are enriched in basic and acidic residues. Acidic residues predominate over residues 144 to 168 (LEEESEDGEKESPQSEDGESEDEGA). 2 consecutive RRM domains span residues 191–303 (RTVF…NVAH) and 311–421 (RCVF…RAKK). The tract at residues 472–520 (EGNRATADGSSRIRVRTKSRGSKAKKDSRSKKRAAAYKAAGGKKAKIGK) is disordered. Residues 484–520 (IRVRTKSRGSKAKKDSRSKKRAAAYKAAGGKKAKIGK) are compositionally biased toward basic residues.

Belongs to the RRM RBM34 family.

Its subcellular location is the nucleus. The protein localises to the nucleolus. Its function is as follows. Involved in pre-25S rRNA processing. This chain is Nucleolar protein 12 (nop12), found in Emericella nidulans (strain FGSC A4 / ATCC 38163 / CBS 112.46 / NRRL 194 / M139) (Aspergillus nidulans).